We begin with the raw amino-acid sequence, 118 residues long: Large ribosomal subunit protein bL20 (118 aa).

It belongs to the bacterial ribosomal protein bL20 family.

Binds directly to 23S ribosomal RNA and is necessary for the in vitro assembly process of the 50S ribosomal subunit. It is not involved in the protein synthesizing functions of that subunit. This Sodalis glossinidius (strain morsitans) protein is Large ribosomal subunit protein bL20.